The chain runs to 222 residues: Ribonuclease T (222 aa).

Residues 20–194 (VVIDVETAGF…YDTERTAELF (175 aa)) enclose the Exonuclease domain. Residues Asp23, Glu25, His181, and Asp186 each contribute to the Mg(2+) site. Catalysis depends on His181, which acts as the Proton donor/acceptor.

The protein belongs to the RNase T family. In terms of assembly, homodimer. It depends on Mg(2+) as a cofactor.

Functionally, trims short 3' overhangs of a variety of RNA species, leaving a one or two nucleotide 3' overhang. Responsible for the end-turnover of tRNA: specifically removes the terminal AMP residue from uncharged tRNA (tRNA-C-C-A). Also appears to be involved in tRNA biosynthesis. The protein is Ribonuclease T of Shewanella oneidensis (strain ATCC 700550 / JCM 31522 / CIP 106686 / LMG 19005 / NCIMB 14063 / MR-1).